A 350-amino-acid polypeptide reads, in one-letter code: Protein RecA (350 aa).

Position 67–74 (67–74 (GPESSGKT)) interacts with ATP.

Belongs to the RecA family.

It localises to the cytoplasm. Functionally, can catalyze the hydrolysis of ATP in the presence of single-stranded DNA, the ATP-dependent uptake of single-stranded DNA by duplex DNA, and the ATP-dependent hybridization of homologous single-stranded DNAs. It interacts with LexA causing its activation and leading to its autocatalytic cleavage. The protein is Protein RecA of Baumannia cicadellinicola subsp. Homalodisca coagulata.